The following is a 623-amino-acid chain: Chaperone protein DnaK (623 aa).

The segment covering glutamine 582–serine 603 has biased composition (low complexity). The disordered stretch occupies residues glutamine 582–lysine 623. Positions alanine 614–lysine 623 are enriched in acidic residues.

It belongs to the heat shock protein 70 family.

Its function is as follows. Acts as a chaperone. In Methanocella arvoryzae (strain DSM 22066 / NBRC 105507 / MRE50), this protein is Chaperone protein DnaK.